The primary structure comprises 111 residues: PHD finger-like domain-containing protein 5A (111 aa).

This sequence belongs to the PHF5 family.

The protein is PHD finger-like domain-containing protein 5A of Drosophila melanogaster (Fruit fly).